The following is a 342-amino-acid chain: Tetraacyldisaccharide 4'-kinase (342 aa).

56–63 (TAGGAGKT) serves as a coordination point for ATP.

It belongs to the LpxK family.

It carries out the reaction a lipid A disaccharide + ATP = a lipid IVA + ADP + H(+). The protein operates within glycolipid biosynthesis; lipid IV(A) biosynthesis; lipid IV(A) from (3R)-3-hydroxytetradecanoyl-[acyl-carrier-protein] and UDP-N-acetyl-alpha-D-glucosamine: step 6/6. Functionally, transfers the gamma-phosphate of ATP to the 4'-position of a tetraacyldisaccharide 1-phosphate intermediate (termed DS-1-P) to form tetraacyldisaccharide 1,4'-bis-phosphate (lipid IVA). The polypeptide is Tetraacyldisaccharide 4'-kinase (Parvibaculum lavamentivorans (strain DS-1 / DSM 13023 / NCIMB 13966)).